Here is a 384-residue protein sequence, read N- to C-terminus: MKIAIPKERRPGEDRVAISPEVVKKLVGLGFEVIVEQGAGVGASITDDALTAAGATIASTAAQALSQADVVWKVQRPMTAEEGTDEVALIKEGAVLMCHLGALTNRPVVEALTKRKITAYAMELMPRISRAQSMDILSSQSNLAGYRAVIDGAYEFARAFPMMMTAAGTVPPARVLVFGVGVAGLQAIATAKRLGAVVMATDVRAATKEQVESLGGKFITVDDEAMKTAETAGGYAKEMGEEFRKKQAEAVLKELVKTDIAITTALIPGKPAPVLITEEMVTKMKPGSVIIDLAVEAGGNCPLSEPGKIVVKHGVKIVGHTNVPSRVAADASPLFAKNLLNFLTPHVDKDTKTLVMKLEDETVSGTCVTRDGAIVHPALTGQGA.

Residues 126-136 (PRISRAQSMDI) are RQD loop; involved in interaction with PntB. Residues 127 to 129 (RIS), 132 to 135 (QSMD), 180 to 182 (VGV), 202 to 204 (DVR), glycine 234, glutamine 247, and leucine 266 contribute to the NAD(+) site.

It belongs to the AlaDH/PNT family. In terms of assembly, heterotrimer of two alpha chains and a beta (PntB) chain; in Rhodospirillum, the alpha chain is made of two subunits (PntAA and PntAB) and forms a dimer.

It catalyses the reaction NAD(+) + NADPH + H(+)(in) = NADH + NADP(+) + H(+)(out). The transhydrogenation between NADH and NADP is coupled to respiration and ATP hydrolysis and functions as a proton pump across the membrane. The polypeptide is NAD(P) transhydrogenase subunit alpha part 1 (pntAA) (Rhodospirillum rubrum (strain ATCC 11170 / ATH 1.1.1 / DSM 467 / LMG 4362 / NCIMB 8255 / S1)).